The chain runs to 365 residues: uncharacterized protein (365 aa).

Topologically, residues methionine 1 to lysine 133 are cytoplasmic. A helical transmembrane segment spans residues leucine 134–threonine 154. Topologically, residues tyrosine 155–tyrosine 169 are extracellular. Residues leucine 170–phenylalanine 190 traverse the membrane as a helical segment. Topologically, residues lysine 191–glutamate 365 are cytoplasmic.

Its subcellular location is the membrane. This is an uncharacterized protein from Saccharomyces cerevisiae (strain ATCC 204508 / S288c) (Baker's yeast).